We begin with the raw amino-acid sequence, 81 residues long: Acyl carrier protein (81 aa).

Residues 3–78 form the Carrier domain; that stretch reads QEIFEKVKSI…AAVDYIEKEQ (76 aa). An O-(pantetheine 4'-phosphoryl)serine modification is found at serine 38.

Belongs to the acyl carrier protein (ACP) family. 4'-phosphopantetheine is transferred from CoA to a specific serine of apo-ACP by AcpS. This modification is essential for activity because fatty acids are bound in thioester linkage to the sulfhydryl of the prosthetic group.

The protein resides in the cytoplasm. It participates in lipid metabolism; fatty acid biosynthesis. Functionally, carrier of the growing fatty acid chain in fatty acid biosynthesis. This is Acyl carrier protein from Crocosphaera subtropica (strain ATCC 51142 / BH68) (Cyanothece sp. (strain ATCC 51142)).